Consider the following 257-residue polypeptide: Acetylglutamate kinase (257 aa).

Substrate contacts are provided by residues 43–44 (GG), Arg-65, and Asn-157. ATP contacts are provided by residues 180–185 (DVSGIL) and 208–210 (IIT).

This sequence belongs to the acetylglutamate kinase family. ArgB subfamily. In terms of assembly, homodimer.

The protein resides in the cytoplasm. The catalysed reaction is N-acetyl-L-glutamate + ATP = N-acetyl-L-glutamyl 5-phosphate + ADP. The protein operates within amino-acid biosynthesis; L-arginine biosynthesis; N(2)-acetyl-L-ornithine from L-glutamate: step 2/4. In terms of biological role, catalyzes the ATP-dependent phosphorylation of N-acetyl-L-glutamate. The polypeptide is Acetylglutamate kinase (Pectobacterium atrosepticum (strain SCRI 1043 / ATCC BAA-672) (Erwinia carotovora subsp. atroseptica)).